The following is a 590-amino-acid chain: Arginine--tRNA ligase, cytoplasmic (590 aa).

Ala-2 is subject to N-acetylalanine. Residues 137 to 139 (SPN), His-148, Tyr-322, Asp-326, and Gln-350 contribute to the L-arginine site. The 'HIGH' region motif lies at 138–149 (PNIAKEMHVGHL). The interaction with tRNA stretch occupies residues 470-484 (DTAVYLLYAHARICS).

It belongs to the class-I aminoacyl-tRNA synthetase family.

The protein resides in the cytoplasm. It is found in the cytosol. The enzyme catalyses tRNA(Arg) + L-arginine + ATP = L-arginyl-tRNA(Arg) + AMP + diphosphate. Its function is as follows. Forms part of a macromolecular complex that catalyzes the attachment of specific amino acids to cognate tRNAs during protein synthesis. This chain is Arginine--tRNA ligase, cytoplasmic, found in Arabidopsis thaliana (Mouse-ear cress).